Reading from the N-terminus, the 380-residue chain is Queuine tRNA-ribosyltransferase (380 aa).

Residue D96 is the Proton acceptor of the active site. Residues 96–100 (DSGGF), D150, Q193, and G220 contribute to the substrate site. The tract at residues 251–257 (GVGAPDS) is RNA binding. Residue D270 is the Nucleophile of the active site. The tract at residues 275–279 (TRIAR) is RNA binding; important for wobble base 34 recognition. Zn(2+) is bound by residues C308, C310, C313, and H339.

Belongs to the queuine tRNA-ribosyltransferase family. Homodimer. Within each dimer, one monomer is responsible for RNA recognition and catalysis, while the other monomer binds to the replacement base PreQ1. Zn(2+) is required as a cofactor.

It carries out the reaction 7-aminomethyl-7-carbaguanine + guanosine(34) in tRNA = 7-aminomethyl-7-carbaguanosine(34) in tRNA + guanine. It functions in the pathway tRNA modification; tRNA-queuosine biosynthesis. In terms of biological role, catalyzes the base-exchange of a guanine (G) residue with the queuine precursor 7-aminomethyl-7-deazaguanine (PreQ1) at position 34 (anticodon wobble position) in tRNAs with GU(N) anticodons (tRNA-Asp, -Asn, -His and -Tyr). Catalysis occurs through a double-displacement mechanism. The nucleophile active site attacks the C1' of nucleotide 34 to detach the guanine base from the RNA, forming a covalent enzyme-RNA intermediate. The proton acceptor active site deprotonates the incoming PreQ1, allowing a nucleophilic attack on the C1' of the ribose to form the product. After dissociation, two additional enzymatic reactions on the tRNA convert PreQ1 to queuine (Q), resulting in the hypermodified nucleoside queuosine (7-(((4,5-cis-dihydroxy-2-cyclopenten-1-yl)amino)methyl)-7-deazaguanosine). In Streptococcus equi subsp. equi (strain 4047), this protein is Queuine tRNA-ribosyltransferase.